A 638-amino-acid chain; its full sequence is Zinc finger protein 143 (638 aa).

The residue at position 1 (methionine 1) is an N-acetylmethionine. Lysine 213 is covalently cross-linked (Glycyl lysine isopeptide (Lys-Gly) (interchain with G-Cter in SUMO2)). 4 consecutive C2H2-type zinc fingers follow at residues phenylalanine 237–histidine 261, tyrosine 267–histidine 291, tyrosine 297–histidine 321, and phenylalanine 327–histidine 351. The residue at position 352 (threonine 352) is a Phosphothreonine. 3 consecutive C2H2-type zinc fingers follow at residues tyrosine 357 to histidine 381, tyrosine 387 to histidine 411, and tyrosine 417 to histidine 440. Lysine 406 is covalently cross-linked (Glycyl lysine isopeptide (Lys-Gly) (interchain with G-Cter in SUMO2)).

The protein belongs to the GLI C2H2-type zinc-finger protein family. Interacts with CHD8. Forms a complex with HCFC1 and ZNF143.

The protein localises to the nucleus. In terms of biological role, transcriptional activator. Activates the gene for selenocysteine tRNA (tRNAsec). Binds to the SPH motif of small nuclear RNA (snRNA) gene promoters. Participates in efficient U6 RNA polymerase III transcription via its interaction with CHD8. In complex with HCFC1 and ZNF143, regulates the expression of several genes, including AP2S1, ESCO2, OPHN1, RBL1, UBXN8 and ZNF32. This chain is Zinc finger protein 143 (Znf143), found in Mus musculus (Mouse).